Here is a 212-residue protein sequence, read N- to C-terminus: Endonuclease III (212 aa).

The region spanning 108 to 127 is the HhH domain; sequence FKELVKLPGVGRKTANVVLN. Residues Cys-187, Cys-194, Cys-197, and Cys-203 each contribute to the [4Fe-4S] cluster site.

This sequence belongs to the Nth/MutY family. [4Fe-4S] cluster is required as a cofactor.

The enzyme catalyses 2'-deoxyribonucleotide-(2'-deoxyribose 5'-phosphate)-2'-deoxyribonucleotide-DNA = a 3'-end 2'-deoxyribonucleotide-(2,3-dehydro-2,3-deoxyribose 5'-phosphate)-DNA + a 5'-end 5'-phospho-2'-deoxyribonucleoside-DNA + H(+). DNA repair enzyme that has both DNA N-glycosylase activity and AP-lyase activity. The DNA N-glycosylase activity releases various damaged pyrimidines from DNA by cleaving the N-glycosidic bond, leaving an AP (apurinic/apyrimidinic) site. The AP-lyase activity cleaves the phosphodiester bond 3' to the AP site by a beta-elimination, leaving a 3'-terminal unsaturated sugar and a product with a terminal 5'-phosphate. In Rickettsia prowazekii (strain Madrid E), this protein is Endonuclease III.